A 230-amino-acid chain; its full sequence is UPF0494 membrane protein C1348.07 (230 aa).

3 helical membrane-spanning segments follow: residues 78-98 (WPLL…NFEV), 120-140 (IWGP…GLIY), and 148-168 (AIPL…VAMV).

The protein belongs to the UPF0494 family.

The protein localises to the vacuole. Its subcellular location is the membrane. This Schizosaccharomyces pombe (strain 972 / ATCC 24843) (Fission yeast) protein is UPF0494 membrane protein C1348.07.